Reading from the N-terminus, the 440-residue chain is tRNA-2-methylthio-N(6)-dimethylallyladenosine synthase (440 aa).

Residues 5-121 (KLLYLETFGC…LPELVRAAEK (117 aa)) enclose the MTTase N-terminal domain. Residues C14, C50, C84, C159, C163, and C166 each contribute to the [4Fe-4S] cluster site. A Radical SAM core domain is found at 145–375 (RTDGVSRFVT…LDLQRRITLE (231 aa)). A TRAM domain is found at 378 to 440 (KSFVGTVQQV…QNSLQGELCR (63 aa)).

It belongs to the methylthiotransferase family. MiaB subfamily. Monomer. The cofactor is [4Fe-4S] cluster.

The protein localises to the cytoplasm. It carries out the reaction N(6)-dimethylallyladenosine(37) in tRNA + (sulfur carrier)-SH + AH2 + 2 S-adenosyl-L-methionine = 2-methylsulfanyl-N(6)-dimethylallyladenosine(37) in tRNA + (sulfur carrier)-H + 5'-deoxyadenosine + L-methionine + A + S-adenosyl-L-homocysteine + 2 H(+). Functionally, catalyzes the methylthiolation of N6-(dimethylallyl)adenosine (i(6)A), leading to the formation of 2-methylthio-N6-(dimethylallyl)adenosine (ms(2)i(6)A) at position 37 in tRNAs that read codons beginning with uridine. This Geotalea uraniireducens (strain Rf4) (Geobacter uraniireducens) protein is tRNA-2-methylthio-N(6)-dimethylallyladenosine synthase.